The chain runs to 95 residues: Small ribosomal subunit protein uS19 (95 aa).

A disordered region spans residues 76-95 (PTRRFGGHADKKAATKGQVR).

The protein belongs to the universal ribosomal protein uS19 family.

Protein S19 forms a complex with S13 that binds strongly to the 16S ribosomal RNA. This chain is Small ribosomal subunit protein uS19, found in Pseudothermotoga lettingae (strain ATCC BAA-301 / DSM 14385 / NBRC 107922 / TMO) (Thermotoga lettingae).